Here is a 514-residue protein sequence, read N- to C-terminus: GMP synthase [glutamine-hydrolyzing] (514 aa).

The Glutamine amidotransferase type-1 domain maps to 9-199; the sequence is KIIVLDFGSQ…ALNVCGCKGD (191 aa). The active-site Nucleophile is C86. Residues H173 and E175 contribute to the active site. A GMPS ATP-PPase domain is found at 200-389; sequence WTMENFSEVE…LGMPDAIVWR (190 aa). An ATP-binding site is contributed by 227–233; it reads SGGVDSS.

As to quaternary structure, homodimer.

The catalysed reaction is XMP + L-glutamine + ATP + H2O = GMP + L-glutamate + AMP + diphosphate + 2 H(+). It functions in the pathway purine metabolism; GMP biosynthesis; GMP from XMP (L-Gln route): step 1/1. In terms of biological role, catalyzes the synthesis of GMP from XMP. The protein is GMP synthase [glutamine-hydrolyzing] of Listeria monocytogenes serotype 4b (strain F2365).